The sequence spans 255 residues: uncharacterized protein (255 aa).

Positions 1 to 23 are cleaved as a signal peptide; it reads MKRLNKLVLGIIFLFLVISITAG. A lipid anchor (N-palmitoyl cysteine) is attached at Cys24. The S-diacylglycerol cysteine moiety is linked to residue Cys24.

The protein belongs to the staphylococcal tandem lipoprotein family.

The protein localises to the cell membrane. This is an uncharacterized protein from Staphylococcus aureus (strain Mu50 / ATCC 700699).